Here is a 613-residue protein sequence, read N- to C-terminus: MESMFEDDISILTQEALGPSEVWLDGPGDPSLGGDMCSASHFALITAYGDIKERLGGLERENATLRRRLKVYEIKYPLITDFGEEHGFPLYEIKDGSLLEVEKVSLQQRLNQFQHELQKNKEQEEQLGEMIQAYEKLCVEKSDLETELGEMRALVETHLRQICGLEKQLQQQQGLRDAAFSSLSPPAVPATACPDLDLHYLALRGGPALGHAGWPGPTSVSVSELERRRLEEALEAAQGEARGAQLREEQLQAECERLQGELKQLQETRAQDLASNQSECGMAWVKRVGDDQVNLALAYTELTEELGRLRELSSLQGRILRTLLQEQARNAGQRHSPLSQRHSPAPACPSPSPPARPPPCAPCQSPAAQRRSPVPPCPSPQQRRSPASPSCPSPVPQRRSPVPPSCQSPSPQRRSPVPPSCPAPQPRPPPPPGERTLAERAYAKPPSHHAKAGFQGRRSYSELAEGAAYAAASPAWLQAEAATLPKPRAYGGELYGPGRPLSPRRAFEGIRLRFEKQPSEEEEWAMPASPPSPEASTIRCASFCAGFPIPESPAATAYAHAEHAQSWPSINLLMETVGSDIRSCPLCQLGFPVGYPDDALIKHIDSHLENSKI.

The homodimerization stretch occupies residues 1 to 280 (MESMFEDDIS…QDLASNQSEC (280 aa)). Residues 48–162 (YGDIKERLGG…ALVETHLRQI (115 aa)) are a coiled coil. A Phosphoserine modification is found at Ser-184. Residues 218–277 (TSVSVSELERRRLEEALEAAQGEARGAQLREEQLQAECERLQGELKQLQETRAQDLASNQ) adopt a coiled-coil conformation. Positions 281-330 (GMAWVKRVGDDQVNLALAYTELTEELGRLRELSSLQGRILRTLLQEQARN) are interaction with TBK1 and IKBKE. The tract at residues 328–457 (ARNAGQRHSP…HHAKAGFQGR (130 aa)) is disordered. Residues 346–361 (PACPSPSPPARPPPCA) are compositionally biased toward pro residues. The segment covering 362–372 (PCQSPAAQRRS) has biased composition (low complexity). Ser-365, Ser-372, Ser-379, Ser-385, Ser-400, and Ser-415 each carry phosphoserine. Over residues 389–406 (PSCPSPVPQRRSPVPPSC) the composition is skewed to pro residues. The span at 416–433 (PVPPSCPAPQPRPPPPPG) shows a compositional bias: pro residues. Ser-502 and Ser-532 each carry phosphoserine. Residues 581–607 (IRSCPLCQLGFPVGYPDDALIKHIDSH) form a UBZ1-type zinc finger. Residues Cys-584, Cys-587, His-603, and His-607 each coordinate Zn(2+).

As to quaternary structure, homodimer. May form a heterodimer with NAP1. Interacts with TKB1 and IKBKE. Weakly interacts with DDX3X.

In terms of biological role, adapter protein which constitutively binds TBK1 and IKBKE playing a role in antiviral innate immunity. Essential for the efficient induction of IRF-dependent transcription following infection with Sendai virus. The polypeptide is TANK-binding kinase 1-binding protein 1 (Rattus norvegicus (Rat)).